The sequence spans 375 residues: Carbamoyl phosphate synthase small chain (375 aa).

A CPSase region spans residues methionine 1–glutamate 185. Serine 47, glycine 237, and glycine 239 together coordinate L-glutamine. The Glutamine amidotransferase type-1 domain maps to lysine 189 to serine 375. Cysteine 265 (nucleophile) is an active-site residue. L-glutamine-binding residues include leucine 266, glutamine 269, asparagine 307, glycine 309, and phenylalanine 310. Residues histidine 349 and glutamate 351 contribute to the active site.

The protein belongs to the CarA family. In terms of assembly, composed of two chains; the small (or glutamine) chain promotes the hydrolysis of glutamine to ammonia, which is used by the large (or ammonia) chain to synthesize carbamoyl phosphate. Tetramer of heterodimers (alpha,beta)4.

It catalyses the reaction hydrogencarbonate + L-glutamine + 2 ATP + H2O = carbamoyl phosphate + L-glutamate + 2 ADP + phosphate + 2 H(+). The enzyme catalyses L-glutamine + H2O = L-glutamate + NH4(+). It functions in the pathway amino-acid biosynthesis; L-arginine biosynthesis; carbamoyl phosphate from bicarbonate: step 1/1. It participates in pyrimidine metabolism; UMP biosynthesis via de novo pathway; (S)-dihydroorotate from bicarbonate: step 1/3. In terms of biological role, small subunit of the glutamine-dependent carbamoyl phosphate synthetase (CPSase). CPSase catalyzes the formation of carbamoyl phosphate from the ammonia moiety of glutamine, carbonate, and phosphate donated by ATP, constituting the first step of 2 biosynthetic pathways, one leading to arginine and/or urea and the other to pyrimidine nucleotides. The small subunit (glutamine amidotransferase) binds and cleaves glutamine to supply the large subunit with the substrate ammonia. The protein is Carbamoyl phosphate synthase small chain of Xanthomonas campestris pv. campestris (strain ATCC 33913 / DSM 3586 / NCPPB 528 / LMG 568 / P 25).